Consider the following 153-residue polypeptide: Large-conductance mechanosensitive channel (153 aa).

2 helical membrane passes run 16 to 36 and 88 to 108; these read VIDLAVGVVIGGAFGSIVKSL and GLFINALVSFTIVAFAIFMLV.

Belongs to the MscL family. Homopentamer.

Its subcellular location is the cell inner membrane. In terms of biological role, channel that opens in response to stretch forces in the membrane lipid bilayer. May participate in the regulation of osmotic pressure changes within the cell. The sequence is that of Large-conductance mechanosensitive channel from Chromobacterium violaceum (strain ATCC 12472 / DSM 30191 / JCM 1249 / CCUG 213 / NBRC 12614 / NCIMB 9131 / NCTC 9757 / MK).